A 497-amino-acid polypeptide reads, in one-letter code: Lysophospholipid acyltransferase 5 (497 aa).

Transmembrane regions (helical) follow at residues 31–51 (LLTI…ISVI), 74–94 (GLDT…VLLL), 100–120 (IFLA…YFYT), 173–193 (LELL…QFPF), 213–235 (AGVR…LRYL), and 264–286 (SLYK…GLTY). Residues Asn-322 and His-358 contribute to the active site. The helical transmembrane segment at 339 to 361 (FLNNRTISYGAALGFLAVWHGYH) threads the bilayer. Asn-398 is a glycosylation site (N-linked (GlcNAc...) asparagine). 2 helical membrane-spanning segments follow: residues 408 to 428 (FITL…AFVF) and 435 to 455 (IVVY…WAAF). The segment at 469-497 (KLAGEDQKLQDSNTDKLVEEKKPEDKKSE) is disordered. A compositionally biased stretch (basic and acidic residues) spans 470-497 (LAGEDQKLQDSNTDKLVEEKKPEDKKSE). At Ser-480 the chain carries Phosphoserine.

Belongs to the membrane-bound acyltransferase family. During gastrulation, expressed mainly along the midline in the presumptive mesoderm. During germ band elongation, expressed in mesoderm and endoderm primordia and in the cephalic furrow. Expression in mesoderm and endoderm lineages continues during germ band shortening. At the end of this process, no longer detected in somatic mesoderm or endoderm layer with expression restricted to anterior and posterior domains of the visceral mesoderm.

It localises to the endoplasmic reticulum. It is found in the membrane. The catalysed reaction is a 1-acyl-sn-glycero-3-phospho-L-serine + an acyl-CoA = a 1,2-diacyl-sn-glycero-3-phospho-L-serine + CoA. It catalyses the reaction 1-(9Z-octadecenoyl)-sn-glycero-3-phospho-L-serine + (9Z)-hexadecenoyl-CoA = 1-(9Z-octadecenoyl)-2-(9Z-hexadecenoyl)-sn-glycero-3-phospho-L-serine + CoA. The enzyme catalyses a 1-acyl-sn-glycero-3-phosphocholine + an acyl-CoA = a 1,2-diacyl-sn-glycero-3-phosphocholine + CoA. It carries out the reaction 1-hexadecanoyl-sn-glycero-3-phosphocholine + (9Z)-octadecenoyl-CoA = 1-hexadecanoyl-2-(9Z-octadecenoyl)-sn-glycero-3-phosphocholine + CoA. The catalysed reaction is (9Z,12Z)-octadecadienoyl-CoA + 1-hexadecanoyl-sn-glycero-3-phosphocholine = 1-hexadecanoyl-2-(9Z,12Z-octadecadienoyl)-sn-glycero-3-phosphocholine + CoA. It catalyses the reaction (5Z,8Z,11Z,14Z)-eicosatetraenoyl-CoA + 1-hexadecanoyl-sn-glycero-3-phosphocholine = 1-hexadecanoyl-2-(5Z,8Z,11Z,14Z-eicosatetraenoyl)-sn-glycero-3-phosphocholine + CoA. The enzyme catalyses (9Z)-hexadecenoyl-CoA + 1-hexadecanoyl-sn-glycero-3-phosphocholine = 1-hexadecanoyl-2-(9Z-hexadecenoyl)-sn-glycero-3-phosphocholine + CoA. It participates in lipid metabolism; phospholipid metabolism. In terms of biological role, acyltransferase that mediates the acylation of lysophospholipids to produce phospholipids (glycerophospholipids). Highest activity with lysophosphatidylcholine (1-acyl-sn-glycero-3-phosphocholine or LPC) producing phosphatidylcholine (1,2-diacyl-sn-glycero-3-phosphocholine or PC) (LPCAT activity), but also converts lysophosphatidylserine (1-acyl-2-hydroxy-sn-glycero-3-phospho-L-serine or LPS) to phosphatidylserine (1,2-diacyl-sn-glycero-3-phospho-L-serine or PS) (LPSAT activity). Has a preference for unsaturated fatty acids of at least 16 carbons such as oleoyl-CoA ((9Z)-octadecenoyl-CoA) and palmitoleoyl-CoA ((9Z)-hexadecenoyl-CoA). Glycerophospholipids are important structural and functional components of cellular membrane, acyl-chain remodeling regulates the molecular species distribution of glycerophospholipids which can affect membrane fluidity and curvature. Essential for fertility and viability together with Oysgedart (Oys). Required for germ cells to migrate into the mesoderm. In Drosophila melanogaster (Fruit fly), this protein is Lysophospholipid acyltransferase 5.